The following is a 627-amino-acid chain: (+)-3-carene synthase 1, chloroplastic (627 aa).

The N-terminal 36 residues, Met-1–Val-36, are a transit peptide targeting the chloroplast. The Mg(2+) site is built by Asp-378, Asp-382, and Asp-530. The DDXXD motif motif lies at Asp-378–Asp-382.

It belongs to the terpene synthase family. Tpsd subfamily. Mg(2+) serves as cofactor. Mn(2+) is required as a cofactor.

The protein resides in the plastid. It is found in the chloroplast. It carries out the reaction (2E)-geranyl diphosphate = (+)-car-3-ene + diphosphate. It participates in terpene metabolism; oleoresin biosynthesis. Its function is as follows. Terpene synthase (TPS) involved in the biosynthesis of monoterpene natural products included in conifer oleoresin secretions and volatile emissions; these compounds contribute to biotic and abiotic stress defense against herbivores (e.g. insect attack by white pine weevil P.strobi) and pathogens. Catalyzes the conversion of (2E)-geranyl diphosphate (GPP) to (+)-car-3-ene. The protein is (+)-3-carene synthase 1, chloroplastic of Picea sitchensis (Sitka spruce).